The primary structure comprises 342 residues: Fatty acid desaturase 6 (342 aa).

2 helical membrane passes run 39-59 and 63-83; these read GVDCAILALSLLALPAGFLCL and NILAFATGITILGVCHYTLTV. The Histidine box-1 motif lies at 87–91; the sequence is HLATH. A helical membrane pass occupies residues 100–120; that stretch reads WSKILMIFFLEVCTAFSAEFA. The short motif at 124 to 128 is the Histidine box-2 element; the sequence is HVNLH. Transmembrane regions (helical) follow at residues 151–171 and 185–205; these read YVYMFLGPLLVPIITPLVALE and LGFICLGLYSQYWLFMNVSGF. Residues 277–281 carry the Histidine box-3 motif; that stretch reads HVEHH.

Belongs to the fatty acid desaturase type 1 family.

It localises to the membrane. It functions in the pathway lipid metabolism; fatty acid metabolism. The protein is Fatty acid desaturase 6 (Fads6) of Mus musculus (Mouse).